The following is a 245-amino-acid chain: Uridylate kinase (245 aa).

ATP is bound at residue 14 to 17; that stretch reads KLSG. Gly56 is a binding site for UMP. ATP-binding residues include Gly57 and Arg61. UMP is bound by residues Asp76 and 137-144; that span reads TGLPFFTT. Positions 164, 170, and 173 each coordinate ATP.

Belongs to the UMP kinase family. Homohexamer.

It is found in the cytoplasm. It carries out the reaction UMP + ATP = UDP + ADP. It functions in the pathway pyrimidine metabolism; CTP biosynthesis via de novo pathway; UDP from UMP (UMPK route): step 1/1. Its activity is regulated as follows. Inhibited by UTP. Functionally, catalyzes the reversible phosphorylation of UMP to UDP. This Syntrophobacter fumaroxidans (strain DSM 10017 / MPOB) protein is Uridylate kinase.